The sequence spans 476 residues: Protein transport protein SEC61 subunit alpha (476 aa).

Over 1-33 (MSSLRFLDLVKPFVPFLPEVQQPETKIPFNQKL) the chain is Cytoplasmic. Residues 34-54 (MWTGLTLLIFLVMSQMPLYGI) traverse the membrane as a helical segment. Topologically, residues 55–76 (VSSDTSDPLYWLRMMMASNRGT) are lumenal. A helical transmembrane segment spans residues 77–97 (LMELGITPIISSGMVFQLLAG). Over 98–119 (THMIDVNLDLKADRELYQTAQK) the chain is Cytoplasmic. A helical transmembrane segment spans residues 120-140 (LFAVILSIGTATVYVFTGLYG). Over 141–146 (PPSDLG) the chain is Lumenal. The chain crosses the membrane as a helical span at residues 147-167 (AGIVFLLILQLVVAGMIVILL). Topologically, residues 168–246 (DELLQKGYGL…YRQNLPNIMN (79 aa)) are cytoplasmic. A helical membrane pass occupies residues 247–267 (LLATLVVFAAVIYLQGFRVEI). Over 268–361 (PVKSSRQRGA…KDALLDPIHT (94 aa)) the chain is Lumenal. The chain crosses the membrane as a helical span at residues 362–382 (AVYIAYMLTACAVFSKTWIEV). Residues 383–415 (SGSSPRDVAKQLKDQGLVMAGHREQSMYKELKR) are Cytoplasmic-facing. A helical membrane pass occupies residues 416–434 (IIPTAAAFGGACIGALSVA). At 435 to 440 (SDLMGA) the chain is on the lumenal side. The chain crosses the membrane as a helical span at residues 441-458 (LGSGTGTLLAVTIIYGYF). Residues 459 to 476 (EIAAKEGDLQGMKGMIMG) lie on the Cytoplasmic side of the membrane.

It belongs to the SecY/SEC61-alpha family. In terms of assembly, heterotrimeric complex composed of SEC61-alpha, SEC61-beta and SEC61-gamma.

The protein localises to the endoplasmic reticulum membrane. Its function is as follows. Appears to play a crucial role in the insertion of secretory and membrane polypeptides into the ER. It is required for assembly of membrane and secretory proteins and is essential for cell growth. It interacts with other membrane proteins required for protein translocation. Upon binding to SEC62/63 complex, secretory precursor polypeptides may engage SEC61 to begin membrane penetration event. A cycle of assembly and disassembly of SEC62/63 from SEC61 may govern the activity of the translocase. The protein is Protein transport protein SEC61 subunit alpha (sec-61) of Neurospora crassa (strain ATCC 24698 / 74-OR23-1A / CBS 708.71 / DSM 1257 / FGSC 987).